A 565-amino-acid chain; its full sequence is Carboxylesterase 1D (565 aa).

A signal peptide spans 1-18; sequence MGLYPLIWLSLAACTAWG. The N-linked (GlcNAc...) asparagine glycan is linked to asparagine 79. The cysteines at positions 87 and 116 are disulfide-linked. Serine 221 acts as the Acyl-ester intermediate in catalysis. Cysteine 273 and cysteine 284 are disulfide-bonded. Glutamate 353 functions as the Charge relay system in the catalytic mechanism. Residue lysine 382 is modified to N6-succinyllysine. Histidine 466 functions as the Charge relay system in the catalytic mechanism. A glycan (N-linked (GlcNAc...) asparagine) is linked at asparagine 489. The short motif at 562-565 is the Prevents secretion from ER element; it reads HVEL.

Belongs to the type-B carboxylesterase/lipase family. As to quaternary structure, homotrimer. Highest expression occurs in liver with lower levels in adipose tissue, kidney, heart, intestine, lung, testis and thymus.

Its subcellular location is the endoplasmic reticulum lumen. It is found in the cytoplasm. The protein localises to the cytosol. It localises to the lipid droplet. The protein resides in the microsome. It carries out the reaction a carboxylic ester + H2O = an alcohol + a carboxylate + H(+). The enzyme catalyses a long-chain fatty acyl ethyl ester + H2O = a long-chain fatty acid + ethanol + H(+). The catalysed reaction is all-trans-retinyl hexadecanoate + H2O = all-trans-retinol + hexadecanoate + H(+). Major lipase in white adipose tissue. Involved in the metabolism of xenobiotics and of natural substrates. Hydrolyzes triacylglycerols and monoacylglycerols, with a preference for monoacylglycerols. The susceptibility of the substrate increases with decreasing acyl chain length of the fatty acid moiety. Catalyzes the synthesis of fatty acid ethyl esters. Hydrolyzes retinyl esters. The polypeptide is Carboxylesterase 1D (Mus musculus (Mouse)).